Reading from the N-terminus, the 240-residue chain is Ribosomal RNA large subunit methyltransferase E (240 aa).

Residues M1–G20 show a composition bias toward gly residues. The interval M1–G33 is disordered. S-adenosyl-L-methionine is bound by residues G92, W94, D115, D131, and D155. K195 (proton acceptor) is an active-site residue.

The protein belongs to the class I-like SAM-binding methyltransferase superfamily. RNA methyltransferase RlmE family.

The protein resides in the cytoplasm. The enzyme catalyses uridine(2552) in 23S rRNA + S-adenosyl-L-methionine = 2'-O-methyluridine(2552) in 23S rRNA + S-adenosyl-L-homocysteine + H(+). Functionally, specifically methylates the uridine in position 2552 of 23S rRNA at the 2'-O position of the ribose in the fully assembled 50S ribosomal subunit. This is Ribosomal RNA large subunit methyltransferase E from Brucella abortus (strain S19).